The chain runs to 440 residues: Transposon Ty1-NL2 Gag polyprotein (440 aa).

Composition is skewed to polar residues over residues 1-23 (MESQ…SVTS), 48-60 (TKAN…TPAS), 71-97 (SPQT…NQAN), and 129-152 (QFPQ…GNTF). Disordered regions lie at residues 1–97 (MESQ…NQAN), 129–171 (QFPQ…YVRP), and 352–440 (GSRN…PETY). Low complexity predominate over residues 153 to 165 (TDSSSADSDMTST). The tract at residues 299–401 (NNGIHINNKV…NSKSKTARAH (103 aa)) is RNA-binding. Positions 402-418 (NVSTSNNSPSTDNDSIS) are enriched in low complexity. Position 416 is a phosphoserine (Ser-416). Residues 419-428 (KSTTEPIQLN) show a composition bias toward polar residues. Positions 429–440 (NKHDLHLRPETY) are enriched in basic and acidic residues.

Homotrimer.

Its subcellular location is the cytoplasm. Capsid protein (CA) is the structural component of the virus-like particle (VLP), forming the shell that encapsulates the retrotransposons dimeric RNA genome. The particles are assembled from trimer-clustered units and there are holes in the capsid shells that allow for the diffusion of macromolecules. CA also has nucleocapsid-like chaperone activity, promoting primer tRNA(i)-Met annealing to the multipartite primer-binding site (PBS), dimerization of Ty1 RNA and initiation of reverse transcription. This is Transposon Ty1-NL2 Gag polyprotein (TY1A-NL2) from Saccharomyces cerevisiae (strain ATCC 204508 / S288c) (Baker's yeast).